The sequence spans 505 residues: RNA-splicing ligase RtcB homolog (505 aa).

Mn(2+)-binding residues include aspartate 119, cysteine 122, histidine 227, histidine 259, and histidine 353. A GMP-binding site is contributed by 226-230 (NHYAE). GMP-binding positions include 353–354 (HN), 402–405 (GGTM), serine 409, 428–431 (HGAG), and lysine 504. Histidine 428 (GMP-histidine intermediate) is an active-site residue.

Belongs to the RtcB family. In terms of assembly, catalytic component of the tRNA-splicing ligase complex. Requires Mn(2+) as cofactor.

The protein resides in the nucleus. Its subcellular location is the cytoplasm. It catalyses the reaction a 3'-end 3'-phospho-ribonucleotide-RNA + a 5'-end dephospho-ribonucleoside-RNA + GTP = a ribonucleotidyl-ribonucleotide-RNA + GMP + diphosphate. The catalysed reaction is a 3'-end 2',3'-cyclophospho-ribonucleotide-RNA + a 5'-end dephospho-ribonucleoside-RNA + GTP + H2O = a ribonucleotidyl-ribonucleotide-RNA + GMP + diphosphate + H(+). Its function is as follows. Catalytic subunit of the tRNA-splicing ligase complex that acts by directly joining spliced tRNA halves to mature-sized tRNAs by incorporating the precursor-derived splice junction phosphate into the mature tRNA as a canonical 3',5'-phosphodiester. May act as an RNA ligase with broad substrate specificity, and may function toward other RNAs. This chain is RNA-splicing ligase RtcB homolog, found in Xenopus tropicalis (Western clawed frog).